Consider the following 73-residue polypeptide: Mu-conotoxin SIIIA (73 aa).

Residues 1 to 20 (MMSKLGVLLTVCPLLFPLTA) form the signal peptide. Positions 20-40 (ALPPDGDQPADRPAERMQDDI) are disordered. Residues 21 to 49 (LPPDGDQPADRPAERMQDDISSDEHPLFD) constitute a propeptide that is removed on maturation. Positions 28-40 (PADRPAERMQDDI) are enriched in basic and acidic residues. Glutamine 52 carries the post-translational modification Pyrrolidone carboxylic acid. 3 cysteine pairs are disulfide-bonded: cysteine 54–cysteine 64, cysteine 55–cysteine 70, and cysteine 59–cysteine 71. Cysteine amide is present on cysteine 71.

This sequence belongs to the conotoxin M superfamily. As to expression, expressed by the venom duct.

Its subcellular location is the secreted. Its function is as follows. Mu-conotoxins block voltage-gated sodium channels (Nav). This toxin moderately blocks rNav1.1/SCN1A, rNav1.2/SCN2A, rNav1.3/SCN3A, rNav1.4/SCN4A, and mNav1.6/SCN8A. This Conus striatus (Striated cone) protein is Mu-conotoxin SIIIA.